Here is a 303-residue protein sequence, read N- to C-terminus: Acetylglutamate kinase (303 aa).

Residues 68–69 (GG), arginine 90, and asparagine 194 each bind substrate.

This sequence belongs to the acetylglutamate kinase family. ArgB subfamily.

The protein resides in the cytoplasm. The enzyme catalyses N-acetyl-L-glutamate + ATP = N-acetyl-L-glutamyl 5-phosphate + ADP. It participates in amino-acid biosynthesis; L-arginine biosynthesis; N(2)-acetyl-L-ornithine from L-glutamate: step 2/4. Catalyzes the ATP-dependent phosphorylation of N-acetyl-L-glutamate. The sequence is that of Acetylglutamate kinase from Psychrobacter arcticus (strain DSM 17307 / VKM B-2377 / 273-4).